Here is a 160-residue protein sequence, read N- to C-terminus: MYSAKNRFVQAVQRLQDFKNMYDYDARLATFADWPFTENCKCTPESMAKAGFVHCPTENEPDVACCFFCLKELEGWEPDDDPWTEHSKRSANCGFLSLTKCVNDLTMEGFLRLEGDRIKSFYRKFSTVVLQYVEEEMTAATKRLLEYFSNQHHCSIDLDH.

The BIR repeat unit spans residues 27-97 (RLATFADWPF…KRSANCGFLS (71 aa)). At T43 the chain carries Phosphothreonine; by CDK1. Zn(2+) contacts are provided by C66, C69, H86, and C93.

Belongs to the IAP family. In terms of assembly, component of the CPC at least composed of survivin/birc5, incenp, cdca8/borealin and/or cdca9/dasra-A, and aurkb/aurora-B. Interacts directly with incenp (via N-terminus), and may weakly interact with aurkb (via N-terminus) to stabilize the complex. Interacts with GTP-bound ran in both the S and M phases of the cell cycle. Also found in a complex with ubiquitin-mediated signaling proteins including at least usp9x/xFAM, nploc4/npl4 and ufd1. Ubiquitination is required for centrosome-targeting.

The protein resides in the cytoplasm. Its subcellular location is the nucleus. The protein localises to the chromosome. It localises to the centromere. It is found in the cytoskeleton. The protein resides in the spindle. In terms of biological role, component of the chromosomal passenger complex (CPC), a complex that acts as a key regulator of mitosis. The CPC complex has essential functions at the centromere in ensuring correct chromosome alignment and segregation and is required for chromatin-induced microtubule stabilization and spindle assembly. Stimulates the mitotic kinase activity of aurkb/aurora-B in the CPC. Does not appear to exhibit anti-apoptotic activity. The protein is Baculoviral IAP repeat-containing protein 5.1-A (birc5.1-a) of Xenopus laevis (African clawed frog).